Here is a 485-residue protein sequence, read N- to C-terminus: Noelin (485 aa).

An N-terminal signal peptide occupies residues 1–16; sequence MSVPLLKIGVVLSTMA. N-linked (GlcNAc...) asparagine glycans are attached at residues Asn33, Asn103, Asn187, Asn288, Asn307, Asn394, Asn431, and Asn473. Residues 87–227 adopt a coiled-coil conformation; that stretch reads RDARTKQLRQ…LRACMQKLAC (141 aa). Residues 226–478 enclose the Olfactomedin-like domain; sequence ACGKLTGISD…QTLYNVTLFH (253 aa). Cys227 and Cys409 are joined by a disulfide. Residues 482–485 carry the Endoplasmic reticulum retention signal motif; that stretch reads SDEL.

In terms of assembly, homotetramer; disulfide-linked. Dimer of dimers, giving rise to a V-shaped homotretramer. Isoform 1 and isoform 3 interact with RTN4R. Identified in a complex with RTN4R and LINGO1. Peripherally associated with AMPAR complex. AMPAR complex consists of an inner core made of 4 pore-forming GluA/GRIA proteins (GRIA1, GRIA2, GRIA3 and GRIA4) and 4 major auxiliary subunits arranged in a twofold symmetry. One of the two pairs of distinct binding sites is occupied either by CNIH2, CNIH3 or CACNG2, CACNG3. The other harbors CACNG2, CACNG3, CACNG4, CACNG8 or GSG1L. This inner core of AMPAR complex is complemented by outer core constituents binding directly to the GluA/GRIA proteins at sites distinct from the interaction sites of the inner core constituents. Outer core constituents include at least PRRT1, PRRT2, CKAMP44/SHISA9, FRRS1L and NRN1. The proteins of the inner and outer core serve as a platform for other, more peripherally associated AMPAR constituents, including OLFM1. Alone or in combination, these auxiliary subunits control the gating and pharmacology of the AMPAR complex and profoundly impact their biogenesis and protein processing. Interacts with OLFM2. Interacts with DTNB. As to expression, expressed in the brain cortex, olfactory bulb and vomeronasal neuroepithelium (at protein level). Detected in brain cortex, hippocampus, dorsal root ganglion and olfactory bulb.

The protein resides in the secreted. The protein localises to the synapse. It is found in the endoplasmic reticulum. Its subcellular location is the cell projection. It localises to the axon. The protein resides in the perikaryon. Functionally, contributes to the regulation of axonal growth in the embryonic and adult central nervous system by inhibiting interactions between RTN4R and LINGO1. Inhibits RTN4R-mediated axon growth cone collapse. May play an important role in regulating the production of neural crest cells by the neural tube. May be required for normal responses to olfactory stimuli. In Mus musculus (Mouse), this protein is Noelin (Olfm1).